The primary structure comprises 409 residues: Peptidase T (409 aa).

Histidine 78 is a binding site for Zn(2+). Aspartate 80 is a catalytic residue. Zn(2+) is bound at residue aspartate 140. Glutamate 173 functions as the Proton acceptor in the catalytic mechanism. Zn(2+) contacts are provided by glutamate 174, aspartate 196, and histidine 379.

The protein belongs to the peptidase M20B family. Zn(2+) is required as a cofactor.

The protein localises to the cytoplasm. The enzyme catalyses Release of the N-terminal residue from a tripeptide.. In terms of biological role, cleaves the N-terminal amino acid of tripeptides. The sequence is that of Peptidase T from Salmonella agona (strain SL483).